A 682-amino-acid polypeptide reads, in one-letter code: Potassium-transporting ATPase ATP-binding subunit (682 aa).

The next 4 membrane-spanning stretches (helical) occupy residues 34–54 (PVMF…LAMV), 58–78 (IAGS…TVLF), 219–239 (IALT…TATL), and 254–274 (VLVA…LSAI). D307 (4-aspartylphosphate intermediate) is an active-site residue. ATP-binding positions include D344, E348, 377–384 (FTAQSRMS), and K395. Residues D518 and D522 each coordinate Mg(2+). 3 helical membrane-spanning segments follow: residues 588-608 (FAII…LNVM), 616-636 (AILS…PLAL), and 662-682 (LVVP…LGLA).

This sequence belongs to the cation transport ATPase (P-type) (TC 3.A.3) family. Type IA subfamily. In terms of assembly, the system is composed of three essential subunits: KdpA, KdpB and KdpC.

The protein localises to the cell inner membrane. It catalyses the reaction K(+)(out) + ATP + H2O = K(+)(in) + ADP + phosphate + H(+). Functionally, part of the high-affinity ATP-driven potassium transport (or Kdp) system, which catalyzes the hydrolysis of ATP coupled with the electrogenic transport of potassium into the cytoplasm. This subunit is responsible for energy coupling to the transport system and for the release of the potassium ions to the cytoplasm. The sequence is that of Potassium-transporting ATPase ATP-binding subunit from Salmonella enteritidis PT4 (strain P125109).